Reading from the N-terminus, the 379-residue chain is Queuine tRNA-ribosyltransferase (379 aa).

Asp-94 acts as the Proton acceptor in catalysis. Residues 94-98, Asp-148, Gln-191, and Gly-218 contribute to the substrate site; that span reads DSGGF. Positions 249-255 are RNA binding; that stretch reads GVGSPDS. Residue Asp-268 is the Nucleophile of the active site. The segment at 273 to 277 is RNA binding; important for wobble base 34 recognition; it reads TRIAR. Zn(2+) contacts are provided by Cys-306, Cys-308, Cys-311, and His-337.

This sequence belongs to the queuine tRNA-ribosyltransferase family. Homodimer. Within each dimer, one monomer is responsible for RNA recognition and catalysis, while the other monomer binds to the replacement base PreQ1. The cofactor is Zn(2+).

The catalysed reaction is 7-aminomethyl-7-carbaguanine + guanosine(34) in tRNA = 7-aminomethyl-7-carbaguanosine(34) in tRNA + guanine. It participates in tRNA modification; tRNA-queuosine biosynthesis. In terms of biological role, catalyzes the base-exchange of a guanine (G) residue with the queuine precursor 7-aminomethyl-7-deazaguanine (PreQ1) at position 34 (anticodon wobble position) in tRNAs with GU(N) anticodons (tRNA-Asp, -Asn, -His and -Tyr). Catalysis occurs through a double-displacement mechanism. The nucleophile active site attacks the C1' of nucleotide 34 to detach the guanine base from the RNA, forming a covalent enzyme-RNA intermediate. The proton acceptor active site deprotonates the incoming PreQ1, allowing a nucleophilic attack on the C1' of the ribose to form the product. After dissociation, two additional enzymatic reactions on the tRNA convert PreQ1 to queuine (Q), resulting in the hypermodified nucleoside queuosine (7-(((4,5-cis-dihydroxy-2-cyclopenten-1-yl)amino)methyl)-7-deazaguanosine). This Bacillus anthracis (strain CDC 684 / NRRL 3495) protein is Queuine tRNA-ribosyltransferase.